Reading from the N-terminus, the 920-residue chain is Probable helicase HelY (920 aa).

The Helicase ATP-binding domain maps to 26-184 (CAALERGHGV…WVQTVRGDTT (159 aa)). 39–46 (APTGAGKT) serves as a coordination point for ATP. The DEVH box motif lies at 132-135 (DEVH). In terms of domain architecture, Helicase C-terminal spans 265-469 (EVIAILDAEG…SYNMTINLVH (205 aa)).

It belongs to the helicase family. SKI2 subfamily.

This Mycobacterium leprae (strain TN) protein is Probable helicase HelY (helY).